The primary structure comprises 78 residues: MAFRENVLEILEEITETDEVVQNTNIKLFDEGLLDSMATVQLLIEIESRLDITVPVSEFDRDEWATPEMIITQLEALK.

Residues 1 to 78 (MAFRENVLEI…MIITQLEALK (78 aa)) form the Carrier domain. Ser-36 is modified (O-(pantetheine 4'-phosphoryl)serine).

The protein belongs to the DltC family. In terms of processing, 4'-phosphopantetheine is transferred from CoA to a specific serine of apo-DCP.

The protein resides in the cytoplasm. Its pathway is cell wall biogenesis; lipoteichoic acid biosynthesis. Functionally, carrier protein involved in the D-alanylation of lipoteichoic acid (LTA). The loading of thioester-linked D-alanine onto DltC is catalyzed by D-alanine--D-alanyl carrier protein ligase DltA. The DltC-carried D-alanyl group is further transferred to cell membrane phosphatidylglycerol (PG) by forming an ester bond, probably catalyzed by DltD. D-alanylation of LTA plays an important role in modulating the properties of the cell wall in Gram-positive bacteria, influencing the net charge of the cell wall. The chain is D-alanyl carrier protein from Listeria innocua serovar 6a (strain ATCC BAA-680 / CLIP 11262).